The chain runs to 92 residues: Small ribosomal subunit protein bS20 (92 aa).

The segment at 1-25 (MANSAQARKRARQAAKANSHNSALR) is disordered.

The protein belongs to the bacterial ribosomal protein bS20 family.

Binds directly to 16S ribosomal RNA. In Burkholderia mallei (strain NCTC 10247), this protein is Small ribosomal subunit protein bS20.